The sequence spans 420 residues: Adenylosuccinate synthetase (420 aa).

GTP contacts are provided by residues 11 to 17 (GDEGKGK) and 39 to 41 (GHT). Asp-12 serves as the catalytic Proton acceptor. The Mg(2+) site is built by Asp-12 and Gly-39. Residues 12 to 15 (DEGK), 37 to 40 (NAGH), Thr-129, Arg-143, Asn-218, Thr-233, and Arg-297 each bind IMP. The Proton donor role is filled by His-40. 293–299 (VTTGRKR) lines the substrate pocket. Residues Arg-299, 325 to 327 (KLD), and 407 to 409 (GTG) each bind GTP.

It belongs to the adenylosuccinate synthetase family. In terms of assembly, homodimer. Mg(2+) serves as cofactor.

The protein localises to the cytoplasm. It carries out the reaction IMP + L-aspartate + GTP = N(6)-(1,2-dicarboxyethyl)-AMP + GDP + phosphate + 2 H(+). The protein operates within purine metabolism; AMP biosynthesis via de novo pathway; AMP from IMP: step 1/2. Functionally, plays an important role in the de novo pathway and in the salvage pathway of purine nucleotide biosynthesis. Catalyzes the first committed step in the biosynthesis of AMP from IMP. This Uncinocarpus reesii (strain UAMH 1704) protein is Adenylosuccinate synthetase.